Consider the following 172-residue polypeptide: Male-specific submandibular salivary gland protein (172 aa).

A signal peptide spans 1–15 (MVKFLLLALALGVSC). An N-linked (GlcNAc...) asparagine glycan is attached at asparagine 41. Intrachain disulfides connect cysteine 60-cysteine 64 and cysteine 79-cysteine 170.

Belongs to the calycin superfamily. Lipocalin family. N-glycosylated. As to expression, expressed in acinar cells of the submandibular salivary gland from where it is secreted into saliva (at protein level). Also released from the submandibular salivary gland into blood and excreted in urine (at protein level). Expressed in the lacrimal gland from where it is secreted into tears (at protein level).

The protein localises to the secreted. Its subcellular location is the cytoplasm. This Mesocricetus auratus (Golden hamster) protein is Male-specific submandibular salivary gland protein.